We begin with the raw amino-acid sequence, 94 residues long: Large ribosomal subunit protein bL27 (94 aa).

Residues 1–9 constitute a propeptide that is removed on maturation; sequence MTLNNLQLF. Residues 9-33 form a disordered region; the sequence is FAHKKGGGSTSNGRDSQAKRLGAKA.

This sequence belongs to the bacterial ribosomal protein bL27 family. In terms of processing, the N-terminus is cleaved by ribosomal processing cysteine protease Prp.

The chain is Large ribosomal subunit protein bL27 from Streptococcus pneumoniae serotype 4 (strain ATCC BAA-334 / TIGR4).